Consider the following 339-residue polypeptide: Biotin synthase (339 aa).

The Radical SAM core domain occupies 55-282 (NAVQLSTLLS…KAVVRLSAGR (228 aa)). Residues C70, C74, and C77 each coordinate [4Fe-4S] cluster. Residues C114, C145, C205, and R277 each contribute to the [2Fe-2S] cluster site.

This sequence belongs to the radical SAM superfamily. Biotin synthase family. In terms of assembly, homodimer. Requires [4Fe-4S] cluster as cofactor. [2Fe-2S] cluster is required as a cofactor.

The enzyme catalyses (4R,5S)-dethiobiotin + (sulfur carrier)-SH + 2 reduced [2Fe-2S]-[ferredoxin] + 2 S-adenosyl-L-methionine = (sulfur carrier)-H + biotin + 2 5'-deoxyadenosine + 2 L-methionine + 2 oxidized [2Fe-2S]-[ferredoxin]. It participates in cofactor biosynthesis; biotin biosynthesis; biotin from 7,8-diaminononanoate: step 2/2. In terms of biological role, catalyzes the conversion of dethiobiotin (DTB) to biotin by the insertion of a sulfur atom into dethiobiotin via a radical-based mechanism. The polypeptide is Biotin synthase (Burkholderia vietnamiensis (strain G4 / LMG 22486) (Burkholderia cepacia (strain R1808))).